The chain runs to 179 residues: Large ribosomal subunit protein uL5 (179 aa).

The protein belongs to the universal ribosomal protein uL5 family. In terms of assembly, part of the 50S ribosomal subunit; part of the 5S rRNA/L5/L18/L25 subcomplex. Contacts the 5S rRNA and the P site tRNA. Forms a bridge to the 30S subunit in the 70S ribosome.

In terms of biological role, this is one of the proteins that bind and probably mediate the attachment of the 5S RNA into the large ribosomal subunit, where it forms part of the central protuberance. In the 70S ribosome it contacts protein S13 of the 30S subunit (bridge B1b), connecting the 2 subunits; this bridge is implicated in subunit movement. Contacts the P site tRNA; the 5S rRNA and some of its associated proteins might help stabilize positioning of ribosome-bound tRNAs. The chain is Large ribosomal subunit protein uL5 from Pseudomonas fluorescens (strain ATCC BAA-477 / NRRL B-23932 / Pf-5).